A 391-amino-acid chain; its full sequence is Elongation factor Tu (391 aa).

Residues 10-201 (KPHVNIGTVG…AVDEYIPTPE (192 aa)) enclose the tr-type G domain. The interval 19–26 (GHVDHGKT) is G1. Residue 19–26 (GHVDHGKT) coordinates GTP. Residue Thr26 participates in Mg(2+) binding. The segment at 55-59 (GITIS) is G2. The segment at 76 to 79 (DCPG) is G3. Residues 76–80 (DCPGH) and 131–134 (NKVD) each bind GTP. Positions 131 to 134 (NKVD) are G4. The G5 stretch occupies residues 169 to 171 (SAL).

This sequence belongs to the TRAFAC class translation factor GTPase superfamily. Classic translation factor GTPase family. EF-Tu/EF-1A subfamily. In terms of assembly, monomer.

Its subcellular location is the cytoplasm. It catalyses the reaction GTP + H2O = GDP + phosphate + H(+). In terms of biological role, GTP hydrolase that promotes the GTP-dependent binding of aminoacyl-tRNA to the A-site of ribosomes during protein biosynthesis. The chain is Elongation factor Tu from Ruegeria sp. (strain TM1040) (Silicibacter sp.).